Reading from the N-terminus, the 74-residue chain is Translational regulator CsrA (74 aa).

The protein belongs to the CsrA/RsmA family. As to quaternary structure, homodimer; the beta-strands of each monomer intercalate to form a hydrophobic core, while the alpha-helices form wings that extend away from the core.

The protein localises to the cytoplasm. Functionally, a translational regulator that binds mRNA to regulate translation initiation and/or mRNA stability. Usually binds in the 5'-UTR at or near the Shine-Dalgarno sequence preventing ribosome-binding, thus repressing translation. Its main target seems to be the major flagellin gene, while its function is anatagonized by FliW. This Oceanobacillus iheyensis (strain DSM 14371 / CIP 107618 / JCM 11309 / KCTC 3954 / HTE831) protein is Translational regulator CsrA.